The sequence spans 118 residues: Putative pterin-4-alpha-carbinolamine dehydratase (118 aa).

It belongs to the pterin-4-alpha-carbinolamine dehydratase family.

It catalyses the reaction (4aS,6R)-4a-hydroxy-L-erythro-5,6,7,8-tetrahydrobiopterin = (6R)-L-erythro-6,7-dihydrobiopterin + H2O. This is Putative pterin-4-alpha-carbinolamine dehydratase from Pseudomonas paraeruginosa (strain DSM 24068 / PA7) (Pseudomonas aeruginosa (strain PA7)).